The primary structure comprises 68 residues: Conotoxin Lt5.2 (68 aa).

Positions Met-1–Pro-19 are cleaved as a signal peptide. The propeptide occupies Lys-20–Ala-54.

It belongs to the conotoxin T superfamily. Contains 2 disulfide bonds that can be either 'C1-C3, C2-C4' or 'C1-C4, C2-C3', since these disulfide connectivities have been observed for conotoxins with cysteine framework V (for examples, see AC P0DQQ7 and AC P81755). Expressed by the venom duct.

It is found in the secreted. This is Conotoxin Lt5.2 from Conus litteratus (Lettered cone).